The primary structure comprises 305 residues: tRNA dimethylallyltransferase (305 aa).

An ATP-binding site is contributed by 9–16; that stretch reads GPTGAGKT. 11 to 16 is a substrate binding site; the sequence is TGAGKT. Interaction with substrate tRNA stretches follow at residues 34 to 37 and 158 to 162; these read DSRQ and QRIVR.

It belongs to the IPP transferase family. Monomer. Requires Mg(2+) as cofactor.

The enzyme catalyses adenosine(37) in tRNA + dimethylallyl diphosphate = N(6)-dimethylallyladenosine(37) in tRNA + diphosphate. In terms of biological role, catalyzes the transfer of a dimethylallyl group onto the adenine at position 37 in tRNAs that read codons beginning with uridine, leading to the formation of N6-(dimethylallyl)adenosine (i(6)A). This chain is tRNA dimethylallyltransferase, found in Oleidesulfovibrio alaskensis (strain ATCC BAA-1058 / DSM 17464 / G20) (Desulfovibrio alaskensis).